A 344-amino-acid chain; its full sequence is Holliday junction branch migration complex subunit RuvB (344 aa).

The tract at residues 1 to 182 is large ATPase domain (RuvB-L); sequence MRIELLNTPP…FGINSRFDYY (182 aa). Residues Ile-21, Arg-22, Gly-63, Lys-66, Thr-67, Thr-68, 129 to 131, Arg-172, Tyr-182, and Arg-219 each bind ATP; that span reads EDF. Residue Thr-67 participates in Mg(2+) binding. The interval 183 to 253 is small ATPAse domain (RuvB-S); it reads APELLEGIIR…IAMKTLDCLE (71 aa). The head domain (RuvB-H) stretch occupies residues 256-344; sequence EEGLDDMDKK…ISLFDAQPTS (89 aa). DNA-binding residues include Arg-311 and Arg-316.

Belongs to the RuvB family. In terms of assembly, homohexamer. Forms an RuvA(8)-RuvB(12)-Holliday junction (HJ) complex. HJ DNA is sandwiched between 2 RuvA tetramers; dsDNA enters through RuvA and exits via RuvB. An RuvB hexamer assembles on each DNA strand where it exits the tetramer. Each RuvB hexamer is contacted by two RuvA subunits (via domain III) on 2 adjacent RuvB subunits; this complex drives branch migration. In the full resolvosome a probable DNA-RuvA(4)-RuvB(12)-RuvC(2) complex forms which resolves the HJ.

Its subcellular location is the cytoplasm. It catalyses the reaction ATP + H2O = ADP + phosphate + H(+). Its function is as follows. The RuvA-RuvB-RuvC complex processes Holliday junction (HJ) DNA during genetic recombination and DNA repair, while the RuvA-RuvB complex plays an important role in the rescue of blocked DNA replication forks via replication fork reversal (RFR). RuvA specifically binds to HJ cruciform DNA, conferring on it an open structure. The RuvB hexamer acts as an ATP-dependent pump, pulling dsDNA into and through the RuvAB complex. RuvB forms 2 homohexamers on either side of HJ DNA bound by 1 or 2 RuvA tetramers; 4 subunits per hexamer contact DNA at a time. Coordinated motions by a converter formed by DNA-disengaged RuvB subunits stimulates ATP hydrolysis and nucleotide exchange. Immobilization of the converter enables RuvB to convert the ATP-contained energy into a lever motion, pulling 2 nucleotides of DNA out of the RuvA tetramer per ATP hydrolyzed, thus driving DNA branch migration. The RuvB motors rotate together with the DNA substrate, which together with the progressing nucleotide cycle form the mechanistic basis for DNA recombination by continuous HJ branch migration. Branch migration allows RuvC to scan DNA until it finds its consensus sequence, where it cleaves and resolves cruciform DNA. In Pelodictyon phaeoclathratiforme (strain DSM 5477 / BU-1), this protein is Holliday junction branch migration complex subunit RuvB.